The chain runs to 126 residues: Fluoride-specific ion channel FluC (126 aa).

Transmembrane regions (helical) follow at residues 4-24 (PLLS…FLGL), 33-53 (IPLG…FAMA), 67-87 (FVIT…IEIV), and 97-117 (MAML…CLGL). Na(+)-binding residues include glycine 74 and threonine 77.

This sequence belongs to the fluoride channel Fluc/FEX (TC 1.A.43) family.

It localises to the cell inner membrane. It carries out the reaction fluoride(in) = fluoride(out). With respect to regulation, na(+) is not transported, but it plays an essential structural role and its presence is essential for fluoride channel function. Functionally, fluoride-specific ion channel. Important for reducing fluoride concentration in the cell, thus reducing its toxicity. This Acinetobacter baumannii (strain SDF) protein is Fluoride-specific ion channel FluC.